The following is a 461-amino-acid chain: A-type ATP synthase subunit B (461 aa).

It belongs to the ATPase alpha/beta chains family. Has multiple subunits with at least A(3), B(3), C, D, E, F, H, I and proteolipid K(x).

Its subcellular location is the cell membrane. Functionally, component of the A-type ATP synthase that produces ATP from ADP in the presence of a proton gradient across the membrane. The B chain is a regulatory subunit. The polypeptide is A-type ATP synthase subunit B (Nitrosopumilus maritimus (strain SCM1)).